Reading from the N-terminus, the 179-residue chain is Thiol-disulfide oxidoreductase ResA (179 aa).

A helical; Signal-anchor for type II membrane protein membrane pass occupies residues 11–30 (TGILLVLICALGYTIYNAVF). The region spanning 36-174 (ISEGSDAPNF…IHDYMNLIKP (139 aa)) is the Thioredoxin domain. A disulfide bridge connects residues cysteine 74 and cysteine 77.

The protein belongs to the thioredoxin family. ResA subfamily.

The protein resides in the cell membrane. It functions in the pathway protein modification; cytochrome c assembly. Thiol-disulfide oxidoreductase which is required in disulfide reduction during c-type cytochrome synthesis. May accept reducing equivalents from CcdA, leading to breakage of disulfide bonds in apocytochrome c; following this reduction heme can be covalently attached. Does not play a role in sporulation. The chain is Thiol-disulfide oxidoreductase ResA (resA) from Bacillus subtilis (strain 168).